A 308-amino-acid polypeptide reads, in one-letter code: Ribosomal RNA large subunit methyltransferase F (308 aa).

The disordered stretch occupies residues 190–212 (DSAASARAGSERKRRNLGQDKND).

This sequence belongs to the methyltransferase superfamily. METTL16/RlmF family.

It localises to the cytoplasm. It catalyses the reaction adenosine(1618) in 23S rRNA + S-adenosyl-L-methionine = N(6)-methyladenosine(1618) in 23S rRNA + S-adenosyl-L-homocysteine + H(+). Specifically methylates the adenine in position 1618 of 23S rRNA. This is Ribosomal RNA large subunit methyltransferase F from Citrobacter koseri (strain ATCC BAA-895 / CDC 4225-83 / SGSC4696).